Reading from the N-terminus, the 468-residue chain is Tumor necrosis factor receptor superfamily member 10A (468 aa).

The N-terminal stretch at 1–23 (MAPPPARVHLGAFLAVTPNPGSA) is a signal peptide. The segment at 17–82 (TPNPGSAASG…APGPRPAREA (66 aa)) is disordered. The span at 20 to 34 (PGSAASGTEAAAATP) shows a compositional bias: low complexity. Residues 24–239 (ASGTEAAAAT…VHKESGNGHN (216 aa)) lie on the Extracellular side of the membrane. Arginine 52 is modified (omega-N-methylarginine). The span at 63 to 74 (GPSARARAGRAP) shows a compositional bias: low complexity. TNFR-Cys repeat units lie at residues 107–145 (SAAT…PGAC), 147–188 (RCTE…NTAC), and 189–229 (QCKP…DIEC). 7 disulfide bridges follow: cysteine 132–cysteine 145, cysteine 148–cysteine 164, cysteine 167–cysteine 180, cysteine 170–cysteine 188, cysteine 190–cysteine 204, cysteine 207–cysteine 221, and cysteine 211–cysteine 229. A glycan (N-linked (GlcNAc...) asparagine) is linked at asparagine 156. A helical membrane pass occupies residues 240–262 (IWVILVVTLVVPLLLVAVLIVCC). Residues 263–468 (CIGSGCGGDP…DGTGSAVSLE (206 aa)) lie on the Cytoplasmic side of the membrane. The Death domain maps to 365 to 448 (MLFFDKFANI…HAREKIQDLL (84 aa)). Phosphoserine occurs at positions 424, 463, and 466.

As to quaternary structure, monomer. Homooligomers and heterooligomers with TNFRSF10B. Three TNFRSF10A molecules interact with the TNFSF10 homotrimer. Can interact with TRADD and RIPK1. Interacts with ARAP1. In the absence of stimulation, interacts with BIRC2, DDX3X and GSK3B. The interaction with BIRC2 and DDX3X is further enhanced upon receptor stimulation and accompanied by DDX3X and BIRC2 cleavage. Interacts with ZDHHC3. Interacts with PTPN6; this interaction enables the inhibition of T-cell receptor signaling via LCK. In terms of assembly, (Microbial infection) Interacts with HCMV protein UL141; this interaction prevents TNFRSF10A cell surface expression. Post-translationally, palmitoylated. Palmitoylation of TNFRSF10A is required for its association with lipid rafts, oligomerization and function in TRAIL-induced cell death. Palmitoylated by ZDHHC3. In terms of tissue distribution, widely expressed. High levels are found in spleen, peripheral blood leukocytes, small intestine and thymus, but also in K-562 erythroleukemia cells, MCF-7 breast carcinoma cells and activated T-cells.

The protein localises to the cell membrane. It localises to the membrane raft. The protein resides in the cytoplasm. Its subcellular location is the cytosol. Its function is as follows. Receptor for the cytotoxic ligand TNFSF10/TRAIL. The adapter molecule FADD recruits caspase-8 to the activated receptor. The resulting death-inducing signaling complex (DISC) performs caspase-8 proteolytic activation which initiates the subsequent cascade of caspases (aspartate-specific cysteine proteases) mediating apoptosis. Promotes the activation of NF-kappa-B. This is Tumor necrosis factor receptor superfamily member 10A (TNFRSF10A) from Homo sapiens (Human).